Reading from the N-terminus, the 444-residue chain is Exodeoxyribonuclease 7 large subunit (444 aa).

It belongs to the XseA family. As to quaternary structure, heterooligomer composed of large and small subunits.

The protein resides in the cytoplasm. The enzyme catalyses Exonucleolytic cleavage in either 5'- to 3'- or 3'- to 5'-direction to yield nucleoside 5'-phosphates.. Bidirectionally degrades single-stranded DNA into large acid-insoluble oligonucleotides, which are then degraded further into small acid-soluble oligonucleotides. This chain is Exodeoxyribonuclease 7 large subunit, found in Pseudoalteromonas translucida (strain TAC 125).